Consider the following 220-residue polypeptide: Phosphatidylserine decarboxylase proenzyme (220 aa).

The Schiff-base intermediate with substrate; via pyruvic acid role is filled by S188. A Pyruvic acid (Ser); by autocatalysis modification is found at S188.

It belongs to the phosphatidylserine decarboxylase family. PSD-A subfamily. In terms of assembly, heterodimer of a large membrane-associated beta subunit and a small pyruvoyl-containing alpha subunit. The cofactor is pyruvate. Post-translationally, is synthesized initially as an inactive proenzyme. Formation of the active enzyme involves a self-maturation process in which the active site pyruvoyl group is generated from an internal serine residue via an autocatalytic post-translational modification. Two non-identical subunits are generated from the proenzyme in this reaction, and the pyruvate is formed at the N-terminus of the alpha chain, which is derived from the carboxyl end of the proenzyme. The post-translation cleavage follows an unusual pathway, termed non-hydrolytic serinolysis, in which the side chain hydroxyl group of the serine supplies its oxygen atom to form the C-terminus of the beta chain, while the remainder of the serine residue undergoes an oxidative deamination to produce ammonia and the pyruvoyl prosthetic group on the alpha chain.

It localises to the cell membrane. The catalysed reaction is a 1,2-diacyl-sn-glycero-3-phospho-L-serine + H(+) = a 1,2-diacyl-sn-glycero-3-phosphoethanolamine + CO2. It participates in phospholipid metabolism; phosphatidylethanolamine biosynthesis; phosphatidylethanolamine from CDP-diacylglycerol: step 2/2. Its function is as follows. Catalyzes the formation of phosphatidylethanolamine (PtdEtn) from phosphatidylserine (PtdSer). The sequence is that of Phosphatidylserine decarboxylase proenzyme from Cytophaga hutchinsonii (strain ATCC 33406 / DSM 1761 / CIP 103989 / NBRC 15051 / NCIMB 9469 / D465).